Here is a 322-residue protein sequence, read N- to C-terminus: MSSKSKSIGIIGAPFSKGQPRGGVEEGPTVLRKAGLLEKLKEQEHDVTDYGDLSFADVPNDSPFHIVKNPRAVGRANEQLAGAVAEIKKNGRISLVLGGDHSLAIGSISGHASVCPDLAVIWVDAHTDINTPLTTTSGNLHGQPVSFLLKELKGKIPDVPGFSWVTPCISAKDIVYIGLRDVDPGEHYIVKTLGIKYFSMTEVDKLGIGKVMEETLCYLLGRKKRPIHLSFDVDGLDPSFTPATGTPVAGGLSYREGIYITEAIHKTGLLSGLDIMEVNPSLGKTPEEVTRTVNTAVALTLASFGVAREGNHKPIDYLHPPK.

The segment covering 1–12 has biased composition (low complexity); that stretch reads MSSKSKSIGIIG. The tract at residues 1 to 26 is disordered; sequence MSSKSKSIGIIGAPFSKGQPRGGVEE. Ser7 is subject to Phosphoserine. The residue at position 17 (Lys17) is an N6-succinyllysine. At Ser62 the chain carries Phosphoserine. Residues His101, Asp124, His126, and Asp128 each coordinate Mn(2+). Substrate-binding positions include 126 to 130 and 137 to 139; these read HTDIN and SGN. Ser163 carries the phosphoserine modification. Substrate is bound at residue Asp183. Mn(2+) contacts are provided by Asp232 and Asp234. Thr246 and Glu277 together coordinate substrate.

This sequence belongs to the arginase family. Homotrimer. Interacts with CMTM6. The cofactor is Mn(2+).

It localises to the cytoplasm. It catalyses the reaction L-arginine + H2O = urea + L-ornithine. It functions in the pathway nitrogen metabolism; urea cycle; L-ornithine and urea from L-arginine: step 1/1. The protein is Arginase-1 (ARG1) of Oryctolagus cuniculus (Rabbit).